The chain runs to 173 residues: Crossover junction endodeoxyribonuclease RuvC (173 aa).

Active-site residues include Asp-8, Glu-67, and Asp-139. Asp-8, Glu-67, and Asp-139 together coordinate Mg(2+).

It belongs to the RuvC family. As to quaternary structure, homodimer which binds Holliday junction (HJ) DNA. The HJ becomes 2-fold symmetrical on binding to RuvC with unstacked arms; it has a different conformation from HJ DNA in complex with RuvA. In the full resolvosome a probable DNA-RuvA(4)-RuvB(12)-RuvC(2) complex forms which resolves the HJ. It depends on Mg(2+) as a cofactor.

It is found in the cytoplasm. The catalysed reaction is Endonucleolytic cleavage at a junction such as a reciprocal single-stranded crossover between two homologous DNA duplexes (Holliday junction).. Its function is as follows. The RuvA-RuvB-RuvC complex processes Holliday junction (HJ) DNA during genetic recombination and DNA repair. Endonuclease that resolves HJ intermediates. Cleaves cruciform DNA by making single-stranded nicks across the HJ at symmetrical positions within the homologous arms, yielding a 5'-phosphate and a 3'-hydroxyl group; requires a central core of homology in the junction. The consensus cleavage sequence is 5'-(A/T)TT(C/G)-3'. Cleavage occurs on the 3'-side of the TT dinucleotide at the point of strand exchange. HJ branch migration catalyzed by RuvA-RuvB allows RuvC to scan DNA until it finds its consensus sequence, where it cleaves and resolves the cruciform DNA. The protein is Crossover junction endodeoxyribonuclease RuvC of Citrobacter koseri (strain ATCC BAA-895 / CDC 4225-83 / SGSC4696).